The primary structure comprises 411 residues: Intracellular hyaluronan-binding protein 4 (411 aa).

Phosphoserine is present on residues Ser7 and Ser36. Residues 42 to 62 (LREAEHRRQQQLQRKRRDEAA) adopt a coiled-coil conformation. Residues 42-271 (LREAEHRRQQ…ECQGTLDEES (230 aa)) are disordered. Position 70 is an omega-N-methylarginine (Arg70). Ser74 is subject to Phosphoserine. Residues 87–97 (GRRESQKERKS) show a composition bias toward basic and acidic residues. Ser108 carries the phosphoserine modification. Composition is skewed to basic and acidic residues over residues 138-181 (VLER…DRPL) and 205-229 (DSFD…RMED). Glycyl lysine isopeptide (Lys-Gly) (interchain with G-Cter in SUMO1); alternate cross-links involve residues Lys212 and Lys274. Residues Lys212 and Lys274 each participate in a glycyl lysine isopeptide (Lys-Gly) (interchain with G-Cter in SUMO2); alternate cross-link. Residues 279-301 (EVEEENQVQEMTLDEWKNLQEQT) are a coiled coil. Positions 296–313 (NLQEQTRPKPEFNIRKPE) are enriched in basic and acidic residues. Residues 296 to 318 (NLQEQTRPKPEFNIRKPESTVPS) are disordered. Lys334 participates in a covalent cross-link: Glycyl lysine isopeptide (Lys-Gly) (interchain with G-Cter in SUMO1); alternate. A Glycyl lysine isopeptide (Lys-Gly) (interchain with G-Cter in SUMO2); alternate cross-link involves residue Lys334. Phosphothreonine; by PKC is present on residues Thr352 and Thr373. A disordered region spans residues 358–411 (NFGNLPRPGRGARGSTRGGRGRMRRTENYGPRAEVVTQDVAPNPDDPEDFPALA). Residues 402–411 (DDPEDFPALA) are compositionally biased toward acidic residues.

This sequence belongs to the SERBP1-HABP4 family. Associates with ribosomes; promoting ribosome stabilization. Interacts with EEF2/eEF2; promoting ribosome stabilization. Interacts with FMR1. Interacts with FXR1 and FXR2. Interacts with CHD3 (via C-terminus). Interacts (via C-terminus) with RACK1. Interacts with p53/TP53. Interacts (via N-terminus) with SRSF9; this interaction is direct. Interacts with SYNCRIP; this interaction is direct. Interacts with MEF2C (via N-terminus); this interaction decreases DNA-binding activity of MEF2C in myocardial cells in response to mechanical stress. Interacts with PRMT1 (via N-terminus). Interacts with SPIN1. Post-translationally, phosphorylated by phorbol 12-myristate 13-acetate (PMA)-activated PKC isoforms at Thr-352 and Thr-373. In terms of processing, methylated. Methylation is decreased by phorbol 12-myristate 13-acetate (PMA)-activated PKC, in vitro. As to expression, expressed in adult heart, brain, liver, kidney, testis, and in various embryonic tissues, but not in adult spleen, lung or skeletal muscle.

It is found in the nucleus. The protein localises to the cytoplasm. It localises to the stress granule. Its subcellular location is the sarcoplasm. The protein resides in the nuclear body. It is found in the nucleolus. The protein localises to the nucleus speckle. It localises to the cajal body. Its subcellular location is the gem. Ribosome-binding protein that promotes ribosome hibernation, a process during which ribosomes are stabilized in an inactive state and preserved from proteasomal degradation. Acts via its association with EEF2/eEF2 factor at the A-site of the ribosome, promoting ribosome stabilization in an inactive state compatible with storage. Plays a key role in ribosome hibernation in the mature oocyte by promoting ribosome stabilization. Ribosomes, which are produced in large quantities during oogenesis, are stored and translationally repressed in the oocyte and early embryo. Also binds RNA, regulating transcription and pre-mRNA splicing. Binds (via C-terminus) to poly(U) RNA. Seems to play a role in PML-nuclear bodies formation. Negatively regulates DNA-binding activity of the transcription factor MEF2C in myocardial cells in response to mechanical stress. This Mus musculus (Mouse) protein is Intracellular hyaluronan-binding protein 4.